An 88-amino-acid chain; its full sequence is Small ribosomal subunit protein uS17 (88 aa).

Belongs to the universal ribosomal protein uS17 family. As to quaternary structure, part of the 30S ribosomal subunit.

Functionally, one of the primary rRNA binding proteins, it binds specifically to the 5'-end of 16S ribosomal RNA. The sequence is that of Small ribosomal subunit protein uS17 from Nitrosospira multiformis (strain ATCC 25196 / NCIMB 11849 / C 71).